Here is a 466-residue protein sequence, read N- to C-terminus: Asparagine--tRNA ligase (466 aa).

Belongs to the class-II aminoacyl-tRNA synthetase family. In terms of assembly, homodimer.

The protein localises to the cytoplasm. The enzyme catalyses tRNA(Asn) + L-asparagine + ATP = L-asparaginyl-tRNA(Asn) + AMP + diphosphate + H(+). This chain is Asparagine--tRNA ligase, found in Xylella fastidiosa (strain Temecula1 / ATCC 700964).